The sequence spans 326 residues: tRNA-cytidine(32) 2-sulfurtransferase (326 aa).

Residues 63-68 carry the PP-loop motif motif; that stretch reads SGGKDS. Residues cysteine 138, cysteine 141, and cysteine 229 each coordinate [4Fe-4S] cluster.

This sequence belongs to the TtcA family. In terms of assembly, homodimer. The cofactor is Mg(2+). Requires [4Fe-4S] cluster as cofactor.

The protein localises to the cytoplasm. It carries out the reaction cytidine(32) in tRNA + S-sulfanyl-L-cysteinyl-[cysteine desulfurase] + AH2 + ATP = 2-thiocytidine(32) in tRNA + L-cysteinyl-[cysteine desulfurase] + A + AMP + diphosphate + H(+). Its pathway is tRNA modification. In terms of biological role, catalyzes the ATP-dependent 2-thiolation of cytidine in position 32 of tRNA, to form 2-thiocytidine (s(2)C32). The sulfur atoms are provided by the cysteine/cysteine desulfurase (IscS) system. This Leptothrix cholodnii (strain ATCC 51168 / LMG 8142 / SP-6) (Leptothrix discophora (strain SP-6)) protein is tRNA-cytidine(32) 2-sulfurtransferase.